The primary structure comprises 299 residues: ATP phosphoribosyltransferase (299 aa).

The protein belongs to the ATP phosphoribosyltransferase family. Long subfamily. In terms of assembly, equilibrium between an active dimeric form, an inactive hexameric form and higher aggregates. Interconversion between the various forms is largely reversible and is influenced by the natural substrates and inhibitors of the enzyme. Mg(2+) is required as a cofactor.

It localises to the cytoplasm. It carries out the reaction 1-(5-phospho-beta-D-ribosyl)-ATP + diphosphate = 5-phospho-alpha-D-ribose 1-diphosphate + ATP. The protein operates within amino-acid biosynthesis; L-histidine biosynthesis; L-histidine from 5-phospho-alpha-D-ribose 1-diphosphate: step 1/9. With respect to regulation, feedback inhibited by histidine. Catalyzes the condensation of ATP and 5-phosphoribose 1-diphosphate to form N'-(5'-phosphoribosyl)-ATP (PR-ATP). Has a crucial role in the pathway because the rate of histidine biosynthesis seems to be controlled primarily by regulation of HisG enzymatic activity. This chain is ATP phosphoribosyltransferase, found in Escherichia coli O17:K52:H18 (strain UMN026 / ExPEC).